Reading from the N-terminus, the 259-residue chain is Proliferating cell nuclear antigen (259 aa).

Residues 61–80 (RCDRNIALGVNLTSLTKVLR) mediate DNA binding. A Glycyl lysine isopeptide (Lys-Gly) (interchain with G-Cter in SUMO); alternate cross-link involves residue K164. A Glycyl lysine isopeptide (Lys-Gly) (interchain with G-Cter in ubiquitin); alternate cross-link involves residue K164.

The protein belongs to the PCNA family. Homotrimer. In terms of processing, monoubiquitinated on Lys-164 upon DNA damage, and then polyubiquitinated through 'Lys-63'-linkage.

The protein localises to the nucleus. Its function is as follows. This protein is an auxiliary protein of DNA polymerase delta and is involved in the control of eukaryotic DNA replication by increasing the polymerase's processibility during elongation of the leading strand. Involved in DNA repair. The protein is Proliferating cell nuclear antigen of Chaetomium thermophilum (strain DSM 1495 / CBS 144.50 / IMI 039719) (Thermochaetoides thermophila).